The primary structure comprises 258 residues: MASTKERENFVYVAKLAEQAERYEEMVEAMKNVANLNVELTVEERNLLSVGYKNVVGARRASWRILSSIEQKEEAKGNDVSVKRIKEYRLKVESELSNICSDIMTVIDEYLIPSSSSGEPSVFFYKMKGDYYRYLAEFKSGDERKEAADHSMKAYQLASTTAEAELASTHPIRLGLALNFSVFYYEILNSPERACHLAKQAFDEAISELDTLSEESYKDSTLIMQLLRDNLTLWTSDIPEDGEEQKVDSARADGGDDA.

Residues 237–258 are disordered; that stretch reads DIPEDGEEQKVDSARADGGDDA. The segment covering 244–258 has biased composition (basic and acidic residues); the sequence is EQKVDSARADGGDDA.

It belongs to the 14-3-3 family.

This chain is 14-3-3-like protein C (GF14C), found in Glycine max (Soybean).